The sequence spans 217 residues: Probable nicotinate-nucleotide adenylyltransferase (217 aa).

The protein belongs to the NadD family.

The enzyme catalyses nicotinate beta-D-ribonucleotide + ATP + H(+) = deamido-NAD(+) + diphosphate. Its pathway is cofactor biosynthesis; NAD(+) biosynthesis; deamido-NAD(+) from nicotinate D-ribonucleotide: step 1/1. Functionally, catalyzes the reversible adenylation of nicotinate mononucleotide (NaMN) to nicotinic acid adenine dinucleotide (NaAD). In Baumannia cicadellinicola subsp. Homalodisca coagulata, this protein is Probable nicotinate-nucleotide adenylyltransferase.